The primary structure comprises 263 residues: Flagellar L-ring protein (263 aa).

Positions 1–15 (MKRLLCLLLLTTLTG) are cleaved as a signal peptide. A lipid anchor (N-palmitoyl cysteine) is attached at cysteine 16. Residue cysteine 16 is the site of S-diacylglycerol cysteine attachment. The segment at 123–143 (KSADAELSKSNDSSMDPLQVG) is disordered.

It belongs to the FlgH family. In terms of assembly, the basal body constitutes a major portion of the flagellar organelle and consists of four rings (L,P,S, and M) mounted on a central rod.

Its subcellular location is the cell outer membrane. The protein localises to the bacterial flagellum basal body. Functionally, assembles around the rod to form the L-ring and probably protects the motor/basal body from shearing forces during rotation. The sequence is that of Flagellar L-ring protein from Aliivibrio fischeri (strain ATCC 700601 / ES114) (Vibrio fischeri).